A 505-amino-acid polypeptide reads, in one-letter code: Flagellin (505 aa).

It belongs to the bacterial flagellin family.

Its subcellular location is the secreted. It is found in the bacterial flagellum. Functionally, flagellin is the subunit protein which polymerizes to form the filaments of bacterial flagella. The sequence is that of Flagellin (fliC) from Salmonella montevideo.